The primary structure comprises 517 residues: Bifunctional purine biosynthesis protein PurH (517 aa).

Residues M1–V145 enclose the MGS-like domain.

This sequence belongs to the PurH family.

It carries out the reaction (6R)-10-formyltetrahydrofolate + 5-amino-1-(5-phospho-beta-D-ribosyl)imidazole-4-carboxamide = 5-formamido-1-(5-phospho-D-ribosyl)imidazole-4-carboxamide + (6S)-5,6,7,8-tetrahydrofolate. The catalysed reaction is IMP + H2O = 5-formamido-1-(5-phospho-D-ribosyl)imidazole-4-carboxamide. It participates in purine metabolism; IMP biosynthesis via de novo pathway; 5-formamido-1-(5-phospho-D-ribosyl)imidazole-4-carboxamide from 5-amino-1-(5-phospho-D-ribosyl)imidazole-4-carboxamide (10-formyl THF route): step 1/1. The protein operates within purine metabolism; IMP biosynthesis via de novo pathway; IMP from 5-formamido-1-(5-phospho-D-ribosyl)imidazole-4-carboxamide: step 1/1. This is Bifunctional purine biosynthesis protein PurH from Prochlorococcus marinus (strain MIT 9215).